A 267-amino-acid polypeptide reads, in one-letter code: Phosphoethanolamine/phosphocholine phosphatase (267 aa).

The active-site Nucleophile is D32. Mg(2+)-binding residues include D32 and D34. D34 acts as the Proton donor in catalysis. Substrate contacts are provided by D43 and D123. D203 lines the Mg(2+) pocket.

The protein belongs to the HAD-like hydrolase superfamily. PHOSPHO family. It depends on Mg(2+) as a cofactor. As to expression, expressed at sites of mineralization in bone and cartilage. Highly expressed in osteoblast cell line SaOS-2 which produces a mineralized matrix, but not in MG-63 cell line, which do not mineralize.

It localises to the extracellular vesicle. The catalysed reaction is phosphoethanolamine + H2O = ethanolamine + phosphate. It catalyses the reaction phosphocholine + H2O = choline + phosphate. Functionally, phosphatase that has a high activity toward phosphoethanolamine (PEA) and phosphocholine (PCho). Involved in the generation of inorganic phosphate for bone mineralization. Acts in a non-redundant manner with PHOSPHO1 in skeletal mineralization: while PHOSPHO1 mediates the initiation of hydroxyapatite crystallization in the matrix vesicles (MVs), ALPL/TNAP catalyzes the spread of hydroxyapatite crystallization in the extracellular matrix. In Homo sapiens (Human), this protein is Phosphoethanolamine/phosphocholine phosphatase.